The following is a 489-amino-acid chain: Probable cytosol aminopeptidase (489 aa).

The Mn(2+) site is built by Lys260 and Asp265. The active site involves Lys272. Asp283, Asp342, and Glu344 together coordinate Mn(2+). Arg346 is an active-site residue.

Belongs to the peptidase M17 family. Requires Mn(2+) as cofactor.

It localises to the cytoplasm. It catalyses the reaction Release of an N-terminal amino acid, Xaa-|-Yaa-, in which Xaa is preferably Leu, but may be other amino acids including Pro although not Arg or Lys, and Yaa may be Pro. Amino acid amides and methyl esters are also readily hydrolyzed, but rates on arylamides are exceedingly low.. The enzyme catalyses Release of an N-terminal amino acid, preferentially leucine, but not glutamic or aspartic acids.. Presumably involved in the processing and regular turnover of intracellular proteins. Catalyzes the removal of unsubstituted N-terminal amino acids from various peptides. This chain is Probable cytosol aminopeptidase, found in Alcanivorax borkumensis (strain ATCC 700651 / DSM 11573 / NCIMB 13689 / SK2).